A 519-amino-acid chain; its full sequence is Nitrogen fixation regulatory protein (519 aa).

The PAS 1 domain occupies Leu23–Lys93. A PAC domain is found at Lys94–Asn148. In terms of domain architecture, PAS 2 spans Leu151–Ala217. Positions Ala302–Ala517 constitute a Histidine kinase domain. A Phosphohistidine; by autocatalysis modification is found at His305.

It depends on FAD as a cofactor.

It catalyses the reaction ATP + protein L-histidine = ADP + protein N-phospho-L-histidine.. In terms of biological role, required for the inhibition of NifA activity in response to oxygen and low level of fixed nitrogen. In Azotobacter vinelandii, this protein is Nitrogen fixation regulatory protein (nifL).